Reading from the N-terminus, the 591-residue chain is N-acetylgalactosaminyltransferase 7 (591 aa).

Residues 1 to 11 are Cytoplasmic-facing; that stretch reads MRVSTIRSGRI. A helical; Signal-anchor for type II membrane protein transmembrane segment spans residues 12 to 29; sequence CRLALCLLVLLPLLYLLA. The N-linked (GlcNAc...) asparagine glycan is linked to Asn30. The Lumenal segment spans residues 30 to 591; the sequence is NWSDHHKRVQ…WWFKEIRPRW (562 aa). The disordered stretch occupies residues 68-100; that stretch reads DGLGNFEPKDVKPRSGPGENGEAHSLSPDKKHM. Intrachain disulfides connect Cys132–Cys367, Cys358–Cys441, Cys479–Cys496, Cys519–Cys532, and Cys558–Cys573. Residues 141–251 form a catalytic subdomain A region; that stretch reads LPRTSVIIVF…TNWLPPLLAP (111 aa). Residues Asp182 and Arg212 each coordinate substrate. Mn(2+)-binding residues include Asp235 and His237. A catalytic subdomain B region spans residues 313 to 375; sequence PYRSPTHAGG…PCSRVGHVYR (63 aa). Trp344 lines the substrate pocket. His372 provides a ligand contact to Mn(2+). Positions 375 and 380 each coordinate substrate. Residues 466–585 form the Ricin B-type lectin domain; sequence LHWGELRSVA…NDSYQQWWFK (120 aa). An N-linked (GlcNAc...) asparagine glycan is attached at Asn576.

This sequence belongs to the glycosyltransferase 2 family. GalNAc-T subfamily. It depends on Mn(2+) as a cofactor. Expressed in developing oocytes and egg chambers. During embryonic stages 9-11, expressed in the primordium of the foregut, midgut and hindgut. Expressed in the salivary glands from embryonic stage 12 onwards. During embryonic stages 12-13, expressed in the posterior midgut and hindgut. During embryonic stages 14-15, expression continues in the hindgut. During embryonic stages 16-17, expressed in the antennomaxillary complex. In third instar larvae, ubiquitously expressed in wing, with increased expression in the notum and ventral wing pouch, eye-antennal, leg and haltere imaginal disks.

It is found in the golgi apparatus membrane. It catalyses the reaction L-seryl-[protein] + UDP-N-acetyl-alpha-D-galactosamine = a 3-O-[N-acetyl-alpha-D-galactosaminyl]-L-seryl-[protein] + UDP + H(+). The catalysed reaction is L-threonyl-[protein] + UDP-N-acetyl-alpha-D-galactosamine = a 3-O-[N-acetyl-alpha-D-galactosaminyl]-L-threonyl-[protein] + UDP + H(+). It functions in the pathway protein modification; protein glycosylation. Functionally, glycopeptide transferase involved in O-linked oligosaccharide biosynthesis, which catalyzes the transfer of an N-acetyl-D-galactosamine residue to an already glycosylated peptide. In contrast to other proteins of the family, it does not act as a peptide transferase that transfers GalNAc onto serine or threonine residue on the protein receptor, but instead requires the prior addition of a GalNAc on a peptide before adding additional GalNAc moieties. Some peptide transferase activity is however not excluded, considering that its appropriate peptide substrate may remain unidentified. Prefers the monoglycosylated Muc5AC-3 as substrate. Might have a role in protein O-glycosylation in the Golgi and thereby in establishing and/or maintaining a proper secretory apparatus structure. In Drosophila melanogaster (Fruit fly), this protein is N-acetylgalactosaminyltransferase 7.